The sequence spans 544 residues: POTE ankyrin domain family member B2 (544 aa).

ANK repeat units lie at residues 135-167, 168-200, 201-233, 234-266, and 267-299; these read QKRT…VLDN, KKRT…IQDE, YGNT…SKNK, CGLT…ALDR, and YGRT…SQDL. The tract at residues 332–457 is disordered; the sequence is SSENSNPEQD…NTGISQDEIL (126 aa). Basic and acidic residues-rich tracts occupy residues 340-355 and 364-375; these read QDLK…RLKV and MSQEPEINKDCD. The span at 439-457 shows a compositional bias: polar residues; sequence TQKQLSEEQNTGISQDEIL.

It belongs to the POTE family.

In Homo sapiens (Human), this protein is POTE ankyrin domain family member B2 (POTEB2).